The primary structure comprises 110 residues: Insulin-2 (110 aa).

Positions 1-24 (MALWMRFLPLLALLFLWESHPTQA) are cleaved as a signal peptide. Disulfide bonds link C31–C96, C43–C109, and C95–C100. Residues 57–87 (EVEDPQVAQLELGGGPGAGDLQTLALEVAQQ) constitute a propeptide, c peptide.

Belongs to the insulin family. Heterodimer of a B chain and an A chain linked by two disulfide bonds.

Its subcellular location is the secreted. In terms of biological role, insulin decreases blood glucose concentration. It increases cell permeability to monosaccharides, amino acids and fatty acids. It accelerates glycolysis, the pentose phosphate cycle, and glycogen synthesis in liver. The chain is Insulin-2 (Ins2) from Mus musculus (Mouse).